We begin with the raw amino-acid sequence, 422 residues long: Serine/threonine-protein kinase H1 homolog (422 aa).

Positions 35 to 80 (FIKYDGGGEKTGSPSPQGQSQAVAKVSQSPPPANDQPEPADSHRKK) are disordered. Over residues 46–62 (GSPSPQGQSQAVAKVSQ) the composition is skewed to polar residues. The Protein kinase domain maps to 96 to 353 (YDIKALIGRG…AGQALKHPWI (258 aa)). ATP-binding positions include 102–110 (IGRGSFSRV) and K125. D216 serves as the catalytic Proton acceptor. Residues 376–422 (RASSRCHSTKSSQSTRSSRSTKSSKARRLREKELRELNRRYQQQCNG) are disordered. Positions 384-396 (TKSSQSTRSSRST) are enriched in low complexity. Basic and acidic residues predominate over residues 405–414 (REKELRELNR).

It belongs to the protein kinase superfamily. CAMK Ser/Thr protein kinase family.

The enzyme catalyses L-seryl-[protein] + ATP = O-phospho-L-seryl-[protein] + ADP + H(+). The catalysed reaction is L-threonyl-[protein] + ATP = O-phospho-L-threonyl-[protein] + ADP + H(+). In Danio rerio (Zebrafish), this protein is Serine/threonine-protein kinase H1 homolog (pskh1).